A 92-amino-acid polypeptide reads, in one-letter code: Signal recognition particle 19 kDa protein (92 aa).

Belongs to the SRP19 family. In terms of assembly, part of the signal recognition particle protein translocation system, which is composed of SRP and FtsY. Archaeal SRP consists of a 7S RNA molecule of 300 nucleotides and two protein subunits: SRP54 and SRP19.

The protein resides in the cytoplasm. Its function is as follows. Involved in targeting and insertion of nascent membrane proteins into the cytoplasmic membrane. Binds directly to 7S RNA and mediates binding of the 54 kDa subunit of the SRP. This is Signal recognition particle 19 kDa protein from Haloarcula marismortui (strain ATCC 43049 / DSM 3752 / JCM 8966 / VKM B-1809) (Halobacterium marismortui).